The following is a 481-amino-acid chain: UDP-N-acetylmuramate--L-alanine ligase (481 aa).

Position 122–128 (G122–T128) interacts with ATP.

The protein belongs to the MurCDEF family.

It is found in the cytoplasm. It catalyses the reaction UDP-N-acetyl-alpha-D-muramate + L-alanine + ATP = UDP-N-acetyl-alpha-D-muramoyl-L-alanine + ADP + phosphate + H(+). Its pathway is cell wall biogenesis; peptidoglycan biosynthesis. Cell wall formation. This is UDP-N-acetylmuramate--L-alanine ligase from Treponema pallidum (strain Nichols).